The following is a 520-amino-acid chain: MPGSLPLNAEACWPKDVGIVALEIYFPSQYVDQAELEKYDGVDAGKYTIGLGQARMGFCTDREDINSLCLTVVQNLMERNSLSYDCIGRLEVGTETIIDKSKSVKSNLMQLFEESGNTDIEGIDTTNACYGGTAAVFNAVNWIESSSWDGRYALVVAGDIAIYATGNARPTGGVGAVALLIGPNAPLIFDRGLRGTHMQHAYDFYKPDMLSEYPIVDGKLSIQCYLSALDRCYSVYRKKIRAQWQKEGNDNDFTLNDFGFMISHSPYCKLVQKSLARMFLNDFLNDQNRDKNSIYSGLEAFGDVKLEDTYFDRDVEKAFMKASSELFNQKTKASLLVSNQNGNMYTSSVYGSLASVLAQYSPQQLAGKRIGVFSYGSGLAATLYSLKVTQDATPGSALDKVTASLCDLKSRLDSRTCVAPDVFAENMKLREDTHHLANYIPQCSIDSLFEGTWYLVRVDEKHRRTYARRPSTNDHNLGDGVGLVHSNTATEHIPSPAKKVPRLPATAAESESAVISNGEH.

A Phosphoserine modification is found at serine 4. 2 residues coordinate (3S)-3-hydroxy-3-methylglutaryl-CoA: aspartate 43 and alanine 44. Alanine 44–lysine 46 provides a ligand contact to CoA. Position 46 is an N6-acetyllysine (lysine 46). Catalysis depends on glutamate 95, which acts as the Proton donor/acceptor. Positions 129, 167, 171, 221, and 264 each coordinate (3S)-3-hydroxy-3-methylglutaryl-CoA. Cysteine 129 functions as the Acyl-thioester intermediate in the catalytic mechanism. CoA is bound at residue asparagine 167. Serine 221 lines the CoA pocket. The active-site Proton donor/acceptor is the histidine 264. The CoA site is built by lysine 269 and lysine 273. (3S)-3-hydroxy-3-methylglutaryl-CoA is bound by residues lysine 273, asparagine 343, and serine 377. Lysine 273 is subject to N6-acetyllysine. A disordered region spans residues serine 486–histidine 520. Phosphoserine is present on residues serine 495 and serine 516.

Belongs to the thiolase-like superfamily. HMG-CoA synthase family. As to quaternary structure, homodimer.

The protein localises to the cytoplasm. The catalysed reaction is acetoacetyl-CoA + acetyl-CoA + H2O = (3S)-3-hydroxy-3-methylglutaryl-CoA + CoA + H(+). The protein operates within metabolic intermediate biosynthesis; (R)-mevalonate biosynthesis; (R)-mevalonate from acetyl-CoA: step 2/3. Its function is as follows. This enzyme condenses acetyl-CoA with acetoacetyl-CoA to form HMG-CoA, which is converted by HMG-CoA reductase (HMGCR) into mevalonate, a precursor for cholesterol synthesis. The polypeptide is Hydroxymethylglutaryl-CoA synthase, cytoplasmic (Cricetulus griseus (Chinese hamster)).